A 419-amino-acid chain; its full sequence is 5-methylthioadenosine/S-adenosylhomocysteine deaminase (419 aa).

The Zn(2+) site is built by His58 and His60. Positions 87 and 179 each coordinate substrate. Zn(2+) is bound at residue His206. Substrate-binding residues include Glu209 and Asp294. Asp294 serves as a coordination point for Zn(2+).

Belongs to the metallo-dependent hydrolases superfamily. MTA/SAH deaminase family. Zn(2+) is required as a cofactor.

It carries out the reaction S-adenosyl-L-homocysteine + H2O + H(+) = S-inosyl-L-homocysteine + NH4(+). The enzyme catalyses S-methyl-5'-thioadenosine + H2O + H(+) = S-methyl-5'-thioinosine + NH4(+). Its function is as follows. Catalyzes the deamination of 5-methylthioadenosine and S-adenosyl-L-homocysteine into 5-methylthioinosine and S-inosyl-L-homocysteine, respectively. Is also able to deaminate adenosine. This chain is 5-methylthioadenosine/S-adenosylhomocysteine deaminase, found in Pyrococcus furiosus (strain ATCC 43587 / DSM 3638 / JCM 8422 / Vc1).